The following is a 484-amino-acid chain: Protein nucleotidyltransferase YdiU (484 aa).

ATP is bound by residues glycine 92, glycine 94, arginine 95, lysine 115, aspartate 127, glycine 128, arginine 178, and arginine 185. The active-site Proton acceptor is the aspartate 258. The Mg(2+) site is built by asparagine 259 and aspartate 268. Aspartate 268 contacts ATP.

This sequence belongs to the SELO family. Mg(2+) is required as a cofactor. It depends on Mn(2+) as a cofactor.

It catalyses the reaction L-seryl-[protein] + ATP = 3-O-(5'-adenylyl)-L-seryl-[protein] + diphosphate. The catalysed reaction is L-threonyl-[protein] + ATP = 3-O-(5'-adenylyl)-L-threonyl-[protein] + diphosphate. It carries out the reaction L-tyrosyl-[protein] + ATP = O-(5'-adenylyl)-L-tyrosyl-[protein] + diphosphate. The enzyme catalyses L-histidyl-[protein] + UTP = N(tele)-(5'-uridylyl)-L-histidyl-[protein] + diphosphate. It catalyses the reaction L-seryl-[protein] + UTP = O-(5'-uridylyl)-L-seryl-[protein] + diphosphate. The catalysed reaction is L-tyrosyl-[protein] + UTP = O-(5'-uridylyl)-L-tyrosyl-[protein] + diphosphate. In terms of biological role, nucleotidyltransferase involved in the post-translational modification of proteins. It can catalyze the addition of adenosine monophosphate (AMP) or uridine monophosphate (UMP) to a protein, resulting in modifications known as AMPylation and UMPylation. The chain is Protein nucleotidyltransferase YdiU from Mycolicibacterium smegmatis (strain ATCC 700084 / mc(2)155) (Mycobacterium smegmatis).